A 214-amino-acid polypeptide reads, in one-letter code: Pyridoxine/pyridoxamine 5'-phosphate oxidase (214 aa).

Residues 9-12 and Lys68 contribute to the substrate site; that span reads RRSY. FMN is bound by residues 63-68, 78-79, Lys85, and Gln107; these read RVVLLK and YT. Substrate is bound by residues Tyr125, Arg129, and Ser133. FMN contacts are provided by residues 142-143 and Trp187; that span reads QS. Residue 193 to 195 coordinates substrate; that stretch reads RLH. Arg197 lines the FMN pocket.

It belongs to the pyridoxamine 5'-phosphate oxidase family. As to quaternary structure, homodimer. FMN is required as a cofactor.

It catalyses the reaction pyridoxamine 5'-phosphate + O2 + H2O = pyridoxal 5'-phosphate + H2O2 + NH4(+). The catalysed reaction is pyridoxine 5'-phosphate + O2 = pyridoxal 5'-phosphate + H2O2. It participates in cofactor metabolism; pyridoxal 5'-phosphate salvage; pyridoxal 5'-phosphate from pyridoxamine 5'-phosphate: step 1/1. Its pathway is cofactor metabolism; pyridoxal 5'-phosphate salvage; pyridoxal 5'-phosphate from pyridoxine 5'-phosphate: step 1/1. Catalyzes the oxidation of either pyridoxine 5'-phosphate (PNP) or pyridoxamine 5'-phosphate (PMP) into pyridoxal 5'-phosphate (PLP). The sequence is that of Pyridoxine/pyridoxamine 5'-phosphate oxidase from Christiangramia forsetii (strain DSM 17595 / CGMCC 1.15422 / KT0803) (Gramella forsetii).